A 392-amino-acid chain; its full sequence is SH3 domain-binding protein 5-like (392 aa).

The interval 1 to 57 (MADLKKAAGGRETPQGELRSEVVEDEGPRSPVAEEPGGSGSNSSETKLSPREEEELD) is disordered. T13 carries the post-translational modification Phosphothreonine. The segment covering 18-28 (LRSEVVEDEGP) has biased composition (basic and acidic residues). Phosphoserine is present on residues S30 and S49. 2 coiled-coil regions span residues 59 to 140 (RIQE…YERA) and 169 to 272 (WQEM…EQIH). The disordered stretch occupies residues 275-332 (RRGLPPHPLGPRRSSPVGAEAGPEGIEDGDSGIEGAEGGGLEEGSSLGPGPGPDTDTL). Positions 317 to 332 (EGSSLGPGPGPDTDTL) are enriched in low complexity. Phosphoserine occurs at positions 342, 349, 357, 361, and 377. The interval 364–392 (GQELGAQSRGRRGSDIGVRGGRHQRSVSL) is disordered. The span at 383-392 (GGRHQRSVSL) shows a compositional bias: basic residues.

The protein belongs to the SH3BP5 family.

Functions as a guanine nucleotide exchange factor (GEF) for RAB11A. The protein is SH3 domain-binding protein 5-like (Sh3bp5l) of Mus musculus (Mouse).